The sequence spans 254 residues: MVIANSNIIFVAGLGGIGLDTSREIVKSGPKNLVVLDRVDNPAAIAELKALNPKVTITFYPYDVTVPLAETKKLLKTIFDKLKTVDLLINGAGILDDNQIERTIAVNFTGTVNTTTAILDFWDKRKGGPGGVVANICSVTGFNSIYQVPVYSASKAAALSFTTSIAKLAHITGVTAYSINPGITKTVLVHKFNSWLGVEPRVAELLLEHPTQTTLQCAQNFVKAIEANQNGAIWKLDLGRLDAIEWTKHWDSGI.

10 to 33 is an NAD(+) binding site; it reads FVAGLGGIGLDTSREIVKSGPKNL. A substrate-binding site is contributed by serine 138. The active-site Proton acceptor is the tyrosine 151.

This sequence belongs to the short-chain dehydrogenases/reductases (SDR) family. In terms of assembly, homodimer.

It carries out the reaction a primary alcohol + NAD(+) = an aldehyde + NADH + H(+). It catalyses the reaction a secondary alcohol + NAD(+) = a ketone + NADH + H(+). The protein is Alcohol dehydrogenase (Adh) of Drosophila grimshawi (Hawaiian fruit fly).